Reading from the N-terminus, the 76-residue chain is Translational regulator CsrA (76 aa).

It belongs to the CsrA/RsmA family. In terms of assembly, homodimer; the beta-strands of each monomer intercalate to form a hydrophobic core, while the alpha-helices form wings that extend away from the core.

The protein localises to the cytoplasm. Functionally, a translational regulator that binds mRNA to regulate translation initiation and/or mRNA stability. Usually binds in the 5'-UTR at or near the Shine-Dalgarno sequence preventing ribosome-binding, thus repressing translation. Its main target seems to be the major flagellin gene, while its function is anatagonized by FliW. This Syntrophomonas wolfei subsp. wolfei (strain DSM 2245B / Goettingen) protein is Translational regulator CsrA.